The sequence spans 300 residues: Acyl-CoA-binding domain-containing protein 6 (300 aa).

Residues 1 to 19 show a composition bias toward low complexity; it reads MASRSPSSSPDSATGSGTD. The interval 1–43 is disordered; sequence MASRSPSSSPDSATGSGTDPARPDTGEPLGGGSDSDSDFGLGK. Residues 60 to 145 enclose the ACB domain; sequence LENEFESAAD…VHALDPEGSQ (86 aa). Residues 87–91, Lys113, and Tyr132 each bind an acyl-CoA; that span reads YARFK. The tract at residues 142-162 is disordered; it reads EGSQKSSERRGGEKRTGFGGP. Positions 147–157 are enriched in basic and acidic residues; the sequence is SSERRGGEKRT. ANK repeat units lie at residues 209-238 and 242-271; these read EGRA…DINS and EGQT…DPSI. The segment at 270–300 is disordered; it reads SIKDQEGSLPEEVTESSAISSLLRQYTAPKG. The segment covering 284–293 has biased composition (polar residues); that stretch reads ESSAISSLLR.

Higly expressed in the central nervous system, developing eyes, otic vesicle, and trunk muscles.

It localises to the cytoplasm. The protein resides in the nucleus. In terms of biological role, binds long-chain acyl-coenzyme A molecules with a strong preference for unsaturated C18:1-CoA. Does not bind fatty acids. Plays a role in protein N-myristoylation. The sequence is that of Acyl-CoA-binding domain-containing protein 6 (acbd6) from Danio rerio (Zebrafish).